The primary structure comprises 428 residues: 3-phosphoshikimate 1-carboxyvinyltransferase (428 aa).

Residues Lys-22, Ser-23, and Arg-27 each contribute to the 3-phosphoshikimate site. Lys-22 is a phosphoenolpyruvate binding site. Gly-96 and Arg-124 together coordinate phosphoenolpyruvate. 3-phosphoshikimate is bound by residues Ser-169, Ser-170, Gln-171, Ser-197, Asp-313, Asn-336, and Lys-340. Gln-171 contacts phosphoenolpyruvate. Asp-313 (proton acceptor) is an active-site residue. The phosphoenolpyruvate site is built by Arg-344, Arg-386, and Lys-411.

It belongs to the EPSP synthase family. Monomer.

The protein localises to the cytoplasm. The catalysed reaction is 3-phosphoshikimate + phosphoenolpyruvate = 5-O-(1-carboxyvinyl)-3-phosphoshikimate + phosphate. The protein operates within metabolic intermediate biosynthesis; chorismate biosynthesis; chorismate from D-erythrose 4-phosphate and phosphoenolpyruvate: step 6/7. Its function is as follows. Catalyzes the transfer of the enolpyruvyl moiety of phosphoenolpyruvate (PEP) to the 5-hydroxyl of shikimate-3-phosphate (S3P) to produce enolpyruvyl shikimate-3-phosphate and inorganic phosphate. This chain is 3-phosphoshikimate 1-carboxyvinyltransferase, found in Photorhabdus laumondii subsp. laumondii (strain DSM 15139 / CIP 105565 / TT01) (Photorhabdus luminescens subsp. laumondii).